Reading from the N-terminus, the 318-residue chain is Thymidylate synthase (318 aa).

DUMP contacts are provided by residues R25 and 180-181; that span reads RR. C200 functions as the Nucleophile in the catalytic mechanism. Residues 220–223, N231, and 261–263 contribute to the dUMP site; these read RSGD and HIY. (6R)-5,10-methylene-5,6,7,8-tetrahydrofolate is bound at residue D223. A317 contacts (6R)-5,10-methylene-5,6,7,8-tetrahydrofolate.

The protein belongs to the thymidylate synthase family. Bacterial-type ThyA subfamily. In terms of assembly, homodimer.

Its subcellular location is the cytoplasm. It carries out the reaction dUMP + (6R)-5,10-methylene-5,6,7,8-tetrahydrofolate = 7,8-dihydrofolate + dTMP. It participates in pyrimidine metabolism; dTTP biosynthesis. Its function is as follows. Catalyzes the reductive methylation of 2'-deoxyuridine-5'-monophosphate (dUMP) to 2'-deoxythymidine-5'-monophosphate (dTMP) while utilizing 5,10-methylenetetrahydrofolate (mTHF) as the methyl donor and reductant in the reaction, yielding dihydrofolate (DHF) as a by-product. This enzymatic reaction provides an intracellular de novo source of dTMP, an essential precursor for DNA biosynthesis. This is Thymidylate synthase from Lactobacillus johnsonii (strain CNCM I-12250 / La1 / NCC 533).